A 624-amino-acid polypeptide reads, in one-letter code: Kelch-like protein diablo (624 aa).

The interval 1–55 is disordered; the sequence is MGDPLLPGSTGLGSGSATAATGGSVTAGSGLGNGGTGGAERPPSPARLTHTSEKH. The span at 15 to 28 shows a compositional bias: low complexity; sequence GSATAATGGSVTAG. Residues 29–38 are compositionally biased toward gly residues; that stretch reads SGLGNGGTGG. The BTB domain maps to 73–140; it reads CDVVLNVGGR…CYTAHIIVEE (68 aa). The BACK domain maps to 175-277; sequence CLGIRAFADT…SPKFLVGTVG (103 aa). Kelch repeat units lie at residues 324-370, 372-418, 419-465, 467-512, 514-559, and 560-606; these read VLFA…VLND, LYAV…VLDG, FLYA…VLSG, LYAI…VFNN, IYAV…VVNG, and QLYA…VMRA.

The protein operates within protein modification; protein ubiquitination. Functionally, probable substrate-specific adapter of an E3 ubiquitin-protein ligase complex which mediates the ubiquitination and subsequent proteasomal degradation of target proteins. May have a role in synapse differentiation and growth. The chain is Kelch-like protein diablo from Drosophila grimshawi (Hawaiian fruit fly).